A 760-amino-acid chain; its full sequence is Colleterpenol synthase (760 aa).

The tract at residues 14 to 335 (ASSGLRSKFR…YTRRYPSKAD (322 aa)) is terpene cyclase. Mg(2+) is bound at residue Asp95. The DDXXD 1 motif lies at 95–99 (DDYYD). The short motif at 233-241 (NDLYSWPKE) is the NSE/DTE element. Residues 336 to 759 (LRQPEVEFVD…LELVLRRLWI (424 aa)) are prenyltransferase. The segment at 359–400 (EEKVVSESVESLPTTEVEDEFSSSDASPGSVDQAISTPPSTT) is disordered. The span at 391–400 (QAISTPPSTT) shows a compositional bias: polar residues. Isopentenyl diphosphate-binding residues include Lys477, Arg480, and His509. Mg(2+) contacts are provided by Asp516 and Asp520. Positions 516-520 (DDIED) match the DDXXD 2 motif. Arg525 contributes to the dimethylallyl diphosphate binding site. Arg526 provides a ligand contact to isopentenyl diphosphate. The dimethylallyl diphosphate site is built by Lys605, Thr606, Gln643, Asn650, Lys660, and Lys670.

The protein in the N-terminal section; belongs to the terpene synthase family. In the C-terminal section; belongs to the FPP/GGPP synthase family. Hexamer. Requires Mg(2+) as cofactor.

It carries out the reaction 5 isopentenyl diphosphate + dimethylallyl diphosphate = all-trans-hexaprenyl diphosphate + 5 diphosphate. It catalyses the reaction all-trans-hexaprenyl diphosphate + H2O = colleterpenol + diphosphate. Functionally, bifunctional terpene synthase that converts dimethylallyl diphosphate (DMAPP) and isopentenyl diphosphate (IPP) into colleterpenol as a single product. The C-terminal prenyltransferase (PT) domain of CgCS catalyzes formation of hexaprenyl diphosphate (HexPP), whereas the N-terminal terpene cyclase (TC) domain catalyzes the cyclization of HexPP to colleterpenol. The chain is Colleterpenol synthase from Colletotrichum gloeosporioides (Anthracnose fungus).